The chain runs to 265 residues: Seminal vesicle secretory protein 3A (265 aa).

The N-terminal stretch at 1–20 (MKSIFFSLSLLLLLEKKAAG) is a signal peptide. A run of 5 repeats spans residues 116–119 (QIKS), 122–125 (QVKS), 129–132 (QLKS), 136–139 (QLKT), and 142–145 (QVKS). Residues 116–145 (QIKSQTQVKSYAAQLKSQPGQLKTIGQVKS) form a 5 X 4 AA tandem repeats of Q-X-K-[ST] region.

Post-translationally, glycosylated. In terms of processing, covalently cross-linked by transglutaminase, which is important for the formation of the gelatinous copulatory plug. Five repeats of Q-X-K-(S/T) in the central region of the protein serve as the transglutaminase substrate site(s). Highly expressed in the seminal vesicle where it is detected in luminal epithelium of the mucosa folds, and also in luminal fluid (at protein level). Not detected in other tissues tested.

The protein localises to the secreted. Its function is as follows. Component of the copulatory plug. The sequence is that of Seminal vesicle secretory protein 3A from Mus musculus (Mouse).